A 353-amino-acid chain; its full sequence is Photosystem II protein D1 (353 aa).

Thr2 is subject to N-acetylthreonine. Thr2 is modified (phosphothreonine). 3 helical membrane passes run 29-46, 118-133, and 142-156; these read YIGWFGVLMIPTLLTATS, HFLLGVACYMGREWEL, and WIAVAYSAPVAAATA. His118 lines the chlorophyll a pocket. Tyr126 contributes to the pheophytin a binding site. Positions 170 and 189 each coordinate [CaMn4O5] cluster. A helical membrane pass occupies residues 197 to 218; it reads FHMLGVAGVFGGSLFSAMHGSL. His198 serves as a coordination point for chlorophyll a. Residues His215 and 264-265 each bind a quinone; that span reads SF. His215 contributes to the Fe cation binding site. His272 contacts Fe cation. The chain crosses the membrane as a helical span at residues 274-288; the sequence is FLAAWPVVGIWFTAL. [CaMn4O5] cluster is bound by residues His332, Glu333, Asp342, and Ala344. The propeptide occupies 345–353; the sequence is AVEVPSTNG.

It belongs to the reaction center PufL/M/PsbA/D family. PSII is composed of 1 copy each of membrane proteins PsbA, PsbB, PsbC, PsbD, PsbE, PsbF, PsbH, PsbI, PsbJ, PsbK, PsbL, PsbM, PsbT, PsbX, PsbY, PsbZ, Psb30/Ycf12, at least 3 peripheral proteins of the oxygen-evolving complex and a large number of cofactors. It forms dimeric complexes. The cofactor is The D1/D2 heterodimer binds P680, chlorophylls that are the primary electron donor of PSII, and subsequent electron acceptors. It shares a non-heme iron and each subunit binds pheophytin, quinone, additional chlorophylls, carotenoids and lipids. D1 provides most of the ligands for the Mn4-Ca-O5 cluster of the oxygen-evolving complex (OEC). There is also a Cl(-1) ion associated with D1 and D2, which is required for oxygen evolution. The PSII complex binds additional chlorophylls, carotenoids and specific lipids.. In terms of processing, tyr-161 forms a radical intermediate that is referred to as redox-active TyrZ, YZ or Y-Z. C-terminally processed by CTPA; processing is essential to allow assembly of the oxygen-evolving complex and thus photosynthetic growth.

It localises to the plastid. Its subcellular location is the chloroplast thylakoid membrane. It catalyses the reaction 2 a plastoquinone + 4 hnu + 2 H2O = 2 a plastoquinol + O2. Photosystem II (PSII) is a light-driven water:plastoquinone oxidoreductase that uses light energy to abstract electrons from H(2)O, generating O(2) and a proton gradient subsequently used for ATP formation. It consists of a core antenna complex that captures photons, and an electron transfer chain that converts photonic excitation into a charge separation. The D1/D2 (PsbA/PsbD) reaction center heterodimer binds P680, the primary electron donor of PSII as well as several subsequent electron acceptors. The polypeptide is Photosystem II protein D1 (Eucalyptus globulus subsp. globulus (Tasmanian blue gum)).